The following is a 556-amino-acid chain: Hydroxylamine reductase (556 aa).

[4Fe-4S] cluster contacts are provided by Cys-4, Cys-7, Cys-19, and Cys-26. Residues His-252, Glu-276, Cys-320, Cys-407, Cys-435, Cys-460, Glu-494, and Lys-496 each contribute to the hybrid [4Fe-2O-2S] cluster site. Residue Cys-407 is modified to Cysteine persulfide.

It belongs to the HCP family. [4Fe-4S] cluster is required as a cofactor. It depends on hybrid [4Fe-2O-2S] cluster as a cofactor.

It is found in the cytoplasm. The enzyme catalyses A + NH4(+) + H2O = hydroxylamine + AH2 + H(+). Its function is as follows. Catalyzes the reduction of hydroxylamine to form NH(3) and H(2)O. The polypeptide is Hydroxylamine reductase (Acidithiobacillus ferridurans).